Consider the following 353-residue polypeptide: Phosphoribosylformylglycinamidine cyclo-ligase (353 aa).

Belongs to the AIR synthase family.

Its subcellular location is the cytoplasm. It catalyses the reaction 2-formamido-N(1)-(5-O-phospho-beta-D-ribosyl)acetamidine + ATP = 5-amino-1-(5-phospho-beta-D-ribosyl)imidazole + ADP + phosphate + H(+). It functions in the pathway purine metabolism; IMP biosynthesis via de novo pathway; 5-amino-1-(5-phospho-D-ribosyl)imidazole from N(2)-formyl-N(1)-(5-phospho-D-ribosyl)glycinamide: step 2/2. The protein is Phosphoribosylformylglycinamidine cyclo-ligase of Ralstonia nicotianae (strain ATCC BAA-1114 / GMI1000) (Ralstonia solanacearum).